Consider the following 456-residue polypeptide: Trigger factor (456 aa).

The PPIase FKBP-type domain occupies 192 to 277 (GDTVVIDFVG…IHEVKTKEVP (86 aa)).

It belongs to the FKBP-type PPIase family. Tig subfamily.

Its subcellular location is the cytoplasm. It catalyses the reaction [protein]-peptidylproline (omega=180) = [protein]-peptidylproline (omega=0). Functionally, involved in protein export. Acts as a chaperone by maintaining the newly synthesized protein in an open conformation. Functions as a peptidyl-prolyl cis-trans isomerase. The chain is Trigger factor from Streptococcus pyogenes serotype M12 (strain MGAS9429).